A 260-amino-acid chain; its full sequence is Triosephosphate isomerase (260 aa).

11–13 (NWK) serves as a coordination point for substrate. Residue His-103 is the Electrophile of the active site. The active-site Proton acceptor is the Glu-175. Residues Gly-181, Ser-220, and 241–242 (GG) contribute to the substrate site.

The protein belongs to the triosephosphate isomerase family. Homodimer.

The protein localises to the cytoplasm. The enzyme catalyses D-glyceraldehyde 3-phosphate = dihydroxyacetone phosphate. It functions in the pathway carbohydrate biosynthesis; gluconeogenesis. Its pathway is carbohydrate degradation; glycolysis; D-glyceraldehyde 3-phosphate from glycerone phosphate: step 1/1. Functionally, involved in the gluconeogenesis. Catalyzes stereospecifically the conversion of dihydroxyacetone phosphate (DHAP) to D-glyceraldehyde-3-phosphate (G3P). This Shewanella woodyi (strain ATCC 51908 / MS32) protein is Triosephosphate isomerase.